Reading from the N-terminus, the 441-residue chain is EMI domain-containing protein 1 (441 aa).

Positions 1–22 are cleaved as a signal peptide; sequence MGGPRAWALLCLGLLLPGGGAA. The EMI domain maps to 33-106; the sequence is RRNWCSYVVT…PGHSGVSCEE (74 aa). 3 cysteine pairs are disulfide-bonded: Cys-37/Cys-96, Cys-62/Cys-68, and Cys-95/Cys-104. Thr-42 carries O-linked (Fuc) threonine glycosylation. N-linked (GlcNAc...) asparagine glycosylation occurs at Asn-51. Asn-136 is a glycosylation site (N-linked (GlcNAc...) asparagine). Disordered stretches follow at residues 162–371 and 405–441; these read QPVP…KSHW and SGAGPAGTGTPSLLRGKRGGHATNYRIVAPRSRDERG. Pro residues-rich tracts occupy residues 163–184 and 222–231; these read PVPPTPATPEDPAPLWGPPPAQ and PPGPQGPPGS. Positions 179 to 368 constitute a Collagen-like domain; the sequence is GPPPAQGSPG…PGPKGDPGEK (190 aa). The span at 232-243 shows a compositional bias: low complexity; it reads PGRAGAVGTPGE. The segment covering 244 to 264 has biased composition (pro residues); sequence RGPPGPPGPPGPPGPPAPVGP. Polar residues predominate over residues 277–288; sequence LSNTFTETNNHW. Over residues 292–311 the composition is skewed to pro residues; sequence PTGPPGPPGPMGPPGPPGPT. 2 stretches are compositionally biased toward basic and acidic residues: residues 335–344 and 359–371; these read PGEKGERGLR and PGPKGDPGEKSHW.

Homo- or heteromers. In terms of processing, O-fucosylated at Thr-42 within the EMI domain by FUT10/POFUT3 and FUT11/POFUT4.

It is found in the secreted. Its subcellular location is the extracellular space. It localises to the extracellular matrix. The protein is EMI domain-containing protein 1 (EMID1) of Homo sapiens (Human).